Consider the following 62-residue polypeptide: Large ribosomal subunit protein bL33 (62 aa).

It belongs to the bacterial ribosomal protein bL33 family.

The chain is Large ribosomal subunit protein bL33 from Acaryochloris marina (strain MBIC 11017).